Here is a 453-residue protein sequence, read N- to C-terminus: Ezy-1 protein (453 aa).

An N-terminal signal peptide occupies residues 1–28 (MQLSNSLRSARSAAASSGCALASRPVVA). 3 disordered regions span residues 167–187 (SDGG…DADG), 272–307 (TGKA…SSGG), and 412–453 (SAGD…SPNM). Residues 279–300 (AEGDDGEGEEEGEAQDVGEDAV) show a composition bias toward acidic residues. Residues 415 to 425 (DGHEPEPKRPE) show a composition bias toward basic and acidic residues.

This Chlamydomonas reinhardtii (Chlamydomonas smithii) protein is Ezy-1 protein (Ezy-1).